Here is a 454-residue protein sequence, read N- to C-terminus: tRNA-2-methylthio-N(6)-dimethylallyladenosine synthase (454 aa).

In terms of domain architecture, MTTase N-terminal spans 6–122; that stretch reads RRYHITTFGC…LQDLLQEVLA (117 aa). [4Fe-4S] cluster contacts are provided by cysteine 15, cysteine 51, cysteine 85, cysteine 157, cysteine 161, and cysteine 164. The Radical SAM core domain maps to 143–380; it reads RESTVTAWVN…NHLVAIKAAE (238 aa). A TRAM domain is found at 383 to 447; it reads QRYLGRIEEV…AFSLTGEPVK (65 aa).

The protein belongs to the methylthiotransferase family. MiaB subfamily. Monomer. It depends on [4Fe-4S] cluster as a cofactor.

It is found in the cytoplasm. It catalyses the reaction N(6)-dimethylallyladenosine(37) in tRNA + (sulfur carrier)-SH + AH2 + 2 S-adenosyl-L-methionine = 2-methylsulfanyl-N(6)-dimethylallyladenosine(37) in tRNA + (sulfur carrier)-H + 5'-deoxyadenosine + L-methionine + A + S-adenosyl-L-homocysteine + 2 H(+). Functionally, catalyzes the methylthiolation of N6-(dimethylallyl)adenosine (i(6)A), leading to the formation of 2-methylthio-N6-(dimethylallyl)adenosine (ms(2)i(6)A) at position 37 in tRNAs that read codons beginning with uridine. The protein is tRNA-2-methylthio-N(6)-dimethylallyladenosine synthase of Gloeothece citriformis (strain PCC 7424) (Cyanothece sp. (strain PCC 7424)).